The sequence spans 4043 residues: Polyketide synthase-nonribosomal peptide synthetase (4043 aa).

The 439-residue stretch at 8–446 (SEPIAIIGTG…GANSHAILES (439 aa)) folds into the Ketosynthase family 3 (KS3) domain. Active-site for beta-ketoacyl synthase activity residues include C181, H320, and H366. The acyl transferase stretch occupies residues 557-877 (VFTGQGAQWA…SRGNSDVEAF (321 aa)). Positions 944–1078 (NELLGRQVLD…CRLRITVGDS (135 aa)) are N-terminal hotdog fold. One can recognise a PKS/mFAS DH domain in the interval 944-1246 (NELLGRQVLD…TQPLSSPTEA (303 aa)). The interval 945–1243 (ELLGRQVLDG…GLQTQPLSSP (299 aa)) is dehydratase (DH) domain. H976 (proton acceptor; for dehydratase activity) is an active-site residue. Residues 1093–1246 (LLEVESDRFY…TQPLSSPTEA (154 aa)) are C-terminal hotdog fold. D1154 acts as the Proton donor; for dehydratase activity in catalysis. The segment at 1400–1585 (RYTKYLAAMA…GIETAIPHHD (186 aa)) is methyltransferase (MT) domain. The interval 2115–2288 (TYWLVGLTGG…NASAVHIGAI (174 aa)) is ketoreductase (KR)domain. The region spanning 2394–2475 (SSSADIYDII…EMVTQAQELL (82 aa)) is the Carrier 1 domain. Residues 2395-2472 (SSADIYDIIS…TVGEMVTQAQ (78 aa)) form a peptidyl carrier protein region. S2435 carries the O-(pantetheine 4'-phosphoryl)serine modification. Disordered regions lie at residues 2476–2575 (PKEL…DPSR) and 2587–2630 (EKHL…SQII). 2 stretches are compositionally biased toward polar residues: residues 2494-2512 (PKNTVQPKQQTKKTIQLQN) and 2520-2534 (ALSQQVSSGVQNMIK). A compositionally biased stretch (basic and acidic residues) spans 2537–2550 (PPKEAEAKQPRPEV). Residues 2617 to 2627 (TSSSSSSTSAS) are compositionally biased toward low complexity. The tract at residues 2640-3069 (KSVPMAFGQS…NPALRLNVPP (430 aa)) is condensation. Residues 3102–3502 (EIVERYPTHV…EGNLILGGRI (401 aa)) form an adenylation region. The Carrier 2 domain maps to 3617 to 3697 (TDESPSMAKM…GMVSLIDHSE (81 aa)). The interval 3622-3694 (SMAKMRDVWA…SLTGMVSLID (73 aa)) is thiolation. The residue at position 3657 (S3657) is an O-(pantetheine 4'-phosphoryl)serine. A reductase-like region spans residues 3735-3954 (LTGATGFLGR…DFVSADRVAM (220 aa)).

The protein in the C-terminal section; belongs to the NRP synthetase family.

It functions in the pathway mycotoxin biosynthesis. In terms of biological role, hybrid PKS-NRPS synthetase; part of the gene cluster that mediates the biosynthesis of the mycotoxins cytochalasins E and K. The hybrid PKS-NRPS synthetase ccsA and the enoyl reductase ccsC are responsible for fusion of phenylalanine with an octaketide backbone and subsequent release of the stable tetramic acid precursor. The polyketide synthase module (PKS) of the PKS-NRPS ccsA is responsible for the synthesis of the octaketide backbone. The downstream nonribosomal peptide synthetase (NRPS) amidates the carboxyl end of the octaketide with a phenylalanine. A reductase-like domain (R) at the C-terminus catalyzes the reductive release of the polyketide-amino acid intermediate. Because ccsA lacks a designated enoylreductase (ER) domain, the required activity is provided the enoyl reductase ccsC. Upon formation of the 11-membered carbocycle-fused perhydroisoindolone intermediate, a number of oxidative steps are required to afford the final cytochalasin E and K, including two hydroxylations at C17 and C18, one alcohol oxidation at C17, one epoxidation at C6 and C7 and two Baeyer-Villiger oxidations. The oxidative modification at C17, C18 and the C6-C7 epoxidation are likely to be catalyzed by the two cytochrome P450 oxygenases ccsD and ccsG. CcsD may be responsible for the epoxidation of the C6-C7 double bond. CcsG may be responsible for the successive oxidative modifications at C17 and C18. The double Baeyer-Villiger oxidations of ketocytochalasin to precytochalasin and cytochalasin Z(16) are among the final steps leading to cytochalasin E and K and are catalyzed by ccsB. The first oxygen insertion step follows that of the classic BVMO mechanism, generating the ester precytochalasin. Release of precytochalasin into an aqueous environment can generate the shunt product iso-precytochalasin through spontaneous isomerization. Alternatively, precytochalasin can undergo further oxidation by ccsB to yield the in-line carbonate-containing cytochalasin Z(16). Cytochalasin Z(16) is a precursor to cytochalasin E and cytochalasin K, whereas iso-precytochalasin is a precursor to cytochalasin Z(17) and rosellichalasin. The hydrolyase ccsE may catalyze hydrolysis of epoxide bond in cytochalasin E to afford cytochalasin K. The function of ccsF has not been assigned but it may play a role in post-PKS-NRPS biosynthetic step, resistance or transport of cytochalasins and related PKS-NRPS products. In Aspergillus clavatus (strain ATCC 1007 / CBS 513.65 / DSM 816 / NCTC 3887 / NRRL 1 / QM 1276 / 107), this protein is Polyketide synthase-nonribosomal peptide synthetase.